The sequence spans 82 residues: Penaeidin-3b (82 aa).

The first 19 residues, 1 to 19, serve as a signal peptide directing secretion; it reads MRLVVCLVFLASFALVCQG. Gln-20 carries the post-translational modification Pyrrolidone carboxylic acid. 3 disulfides stabilise this stretch: Cys-51–Cys-66, Cys-55–Cys-73, and Cys-67–Cys-74. Ser-81 is modified (serine amide).

This sequence belongs to the penaeidin family. Higher expression in hemocytes and to a lesser extent in heart, testis, gills, intestine, lymphoid organ and hepatopancreas. Traces in eyes and subcuticular epithelium. Not present in the brain.

It localises to the cytoplasmic granule. Functionally, antibacterial activity against M.luteus and E.coli bacteria. Antifungal activity against N.crassa and F.oxysporum. Presents chitin-binding activity. In Penaeus vannamei (Whiteleg shrimp), this protein is Penaeidin-3b.